The primary structure comprises 173 residues: Small ribosomal subunit protein uS4c (173 aa).

The region spanning 94 to 155 (SRLDSKIYRS…TKLTSELIEK (62 aa)) is the S4 RNA-binding domain.

The protein belongs to the universal ribosomal protein uS4 family. In terms of assembly, part of the 30S ribosomal subunit. Contacts protein S5. The interaction surface between S4 and S5 is involved in control of translational fidelity.

It is found in the plastid. Its function is as follows. One of the primary rRNA binding proteins, it binds directly to 16S rRNA where it nucleates assembly of the body of the 30S subunit. In terms of biological role, with S5 and S12 plays an important role in translational accuracy. The polypeptide is Small ribosomal subunit protein uS4c (rps4) (Helicosporidium sp. subsp. Simulium jonesii (Green alga)).